A 204-amino-acid polypeptide reads, in one-letter code: Paraneoplastic antigen-like protein 8C (204 aa).

A disordered region spans residues 135–204 (PPATGPRELP…RRHHASDKKL (70 aa)). Over residues 182–204 (VGKRGKRKNKKNRRRHHASDKKL) the composition is skewed to basic residues.

This sequence belongs to the PNMA family.

The polypeptide is Paraneoplastic antigen-like protein 8C (Homo sapiens (Human)).